A 496-amino-acid chain; its full sequence is Alanine aminotransferase 1 (496 aa).

An N-acetylalanine modification is found at A2. T22 bears the Phosphothreonine mark. Residue K314 is modified to N6-(pyridoxal phosphate)lysine.

This sequence belongs to the class-I pyridoxal-phosphate-dependent aminotransferase family. Alanine aminotransferase subfamily. As to quaternary structure, homodimer. Pyridoxal 5'-phosphate serves as cofactor. As to expression, liver, kidney, heart, and skeletal muscles. Expressed at moderate levels in the adipose tissue.

The protein localises to the cytoplasm. The enzyme catalyses L-alanine + 2-oxoglutarate = pyruvate + L-glutamate. The protein operates within amino-acid degradation; L-alanine degradation via transaminase pathway; pyruvate from L-alanine: step 1/1. Its function is as follows. Catalyzes the reversible transamination between alanine and 2-oxoglutarate to form pyruvate and glutamate. Participates in cellular nitrogen metabolism and also in liver gluconeogenesis starting with precursors transported from skeletal muscles. In Homo sapiens (Human), this protein is Alanine aminotransferase 1 (GPT).